Reading from the N-terminus, the 1025-residue chain is Beta-galactosidase (1025 aa).

Glu482 (proton donor) is an active-site residue. The active-site Nucleophile is Glu551.

This sequence belongs to the glycosyl hydrolase 2 family.

The catalysed reaction is Hydrolysis of terminal non-reducing beta-D-galactose residues in beta-D-galactosides.. The protein is Beta-galactosidase (LAC4) of Kluyveromyces lactis (strain ATCC 8585 / CBS 2359 / DSM 70799 / NBRC 1267 / NRRL Y-1140 / WM37) (Yeast).